The primary structure comprises 1038 residues: Type I restriction enzyme EcoR124I/EcoR124II endonuclease subunit (1038 aa).

Residues 31 to 249 (QSESDLEREL…LKDFTATCFQ (219 aa)) form a nuclease domain region. The tract at residues 250-469 (KHTLLNVLVN…SYVITDAIRD (220 aa)) is motor 1 domain. The region spanning 294-439 (KNWSKPESGG…YQFGFTGTPI (146 aa)) is the Helicase ATP-binding domain. 307–314 (HTTGSGKT) is an ATP binding site. Positions 408 to 411 (DECH) match the DEAH box motif. The tract at residues 470–702 (EKVLKFKVDY…YDATKTFGNI (233 aa)) is motor 2 domain. The tract at residues 720-732 (GDKNTKNVVLEKS) is motor 2-helicase linker. Positions 732–860 (SYTEYMEGFT…NDIRDWQRRE (129 aa)) are helicase domain. The tract at residues 859 to 886 (REKEAEKKEKSTTDWDDVVFEVDLLKSQ) is helicase-CTD linker. The C-terminal domain stretch occupies residues 886–1038 (QEINLDYILG…EKFKGVGGKI (153 aa)).

Belongs to the HsdR family. A monomer in solution. The type I restriction/modification system is composed of three polypeptides R, M and S; the restriction enzyme has stoichiometry R(2)M(2)S(1) while the methyltransferase is M(2)S(1). There is an equilibrium between R(2)M(2)S(1) and R(1)M(2)S(1); the latter is methylation and translocation proficient but restriction deficient. As to quaternary structure, (Microbial infection) Holoenenzyme interacts with Escherichia phage T7 protein Ocr; this interaction leads to the inhibition of the restriction activity, but may still allow methylation and translocation.

It carries out the reaction Endonucleolytic cleavage of DNA to give random double-stranded fragments with terminal 5'-phosphates, ATP is simultaneously hydrolyzed.. Functionally, the restriction (R) subunit of a type I restriction enzyme that recognizes 5'-GAAN(6)RTCG-3' (for EcoR124I) and 5'-GAAN(7)RTCG-3' (for EcoR124II) and cleaves a random distance away. Subunit R is required for both nuclease and ATPase activities, but not for modification. After locating an unmethylated recognition site, the enzyme complex serves as a molecular motor that translocates DNA in an ATP-dependent manner until a collision occurs that triggers cleavage. The enzyme undergoes major structural changes to bring the motor domains into contact with DNA, allowing DNA translocation. This prevents DNA access to the catalytic domains of both the R and M subunits, preventing both restriction and methylation. The R(1)M(2)S(1) complex translocates an average of 555 bp/second on nicked DNA; the R(2)M(2)S(1) complex translocates at double that speed. The 2 R subunit motors are independent and track along the helical pitch of the DNA, inducing positive supercoiling ahead of themselves. This Escherichia coli protein is Type I restriction enzyme EcoR124I/EcoR124II endonuclease subunit.